A 118-amino-acid chain; its full sequence is Large ribosomal subunit protein bL20 (118 aa).

The protein belongs to the bacterial ribosomal protein bL20 family.

Binds directly to 23S ribosomal RNA and is necessary for the in vitro assembly process of the 50S ribosomal subunit. It is not involved in the protein synthesizing functions of that subunit. The polypeptide is Large ribosomal subunit protein bL20 (Pseudomonas syringae pv. syringae (strain B728a)).